The sequence spans 185 residues: Large ribosomal subunit protein uL5 (185 aa).

This sequence belongs to the universal ribosomal protein uL5 family. As to quaternary structure, part of the 50S ribosomal subunit; part of the 5S rRNA/L5/L18/L25 subcomplex. Contacts the 5S rRNA and the P site tRNA. Forms a bridge to the 30S subunit in the 70S ribosome.

In terms of biological role, this is one of the proteins that bind and probably mediate the attachment of the 5S RNA into the large ribosomal subunit, where it forms part of the central protuberance. In the 70S ribosome it contacts protein S13 of the 30S subunit (bridge B1b), connecting the 2 subunits; this bridge is implicated in subunit movement. Contacts the P site tRNA; the 5S rRNA and some of its associated proteins might help stabilize positioning of ribosome-bound tRNAs. The chain is Large ribosomal subunit protein uL5 from Rhodopseudomonas palustris (strain BisB18).